A 309-amino-acid chain; its full sequence is Aspartate carbamoyltransferase catalytic subunit (309 aa).

2 residues coordinate carbamoyl phosphate: Arg-55 and Thr-56. Residue Lys-85 participates in L-aspartate binding. Carbamoyl phosphate-binding residues include Arg-106, His-135, and Gln-138. Residues Arg-168 and Arg-230 each coordinate L-aspartate. Carbamoyl phosphate contacts are provided by Leu-268 and Pro-269.

This sequence belongs to the aspartate/ornithine carbamoyltransferase superfamily. ATCase family. As to quaternary structure, heterododecamer (2C3:3R2) of six catalytic PyrB chains organized as two trimers (C3), and six regulatory PyrI chains organized as three dimers (R2).

It catalyses the reaction carbamoyl phosphate + L-aspartate = N-carbamoyl-L-aspartate + phosphate + H(+). Its pathway is pyrimidine metabolism; UMP biosynthesis via de novo pathway; (S)-dihydroorotate from bicarbonate: step 2/3. Catalyzes the condensation of carbamoyl phosphate and aspartate to form carbamoyl aspartate and inorganic phosphate, the committed step in the de novo pyrimidine nucleotide biosynthesis pathway. The sequence is that of Aspartate carbamoyltransferase catalytic subunit from Vibrio cholerae serotype O1 (strain ATCC 39315 / El Tor Inaba N16961).